The chain runs to 430 residues: CinA-like protein (430 aa).

This sequence belongs to the CinA family.

The protein is CinA-like protein of Prochlorococcus marinus (strain NATL1A).